The sequence spans 221 residues: Putative 3-methyladenine DNA glycosylase (221 aa).

The protein belongs to the DNA glycosylase MPG family.

This is Putative 3-methyladenine DNA glycosylase from Herpetosiphon aurantiacus (strain ATCC 23779 / DSM 785 / 114-95).